A 732-amino-acid polypeptide reads, in one-letter code: Aldehyde oxidoreductase molybdenum-binding subunit PaoC (732 aa).

Residues 241 to 242 (GF), 468 to 470 (IGT), 511 to 512 (GA), 615 to 621 (RILNPKT), glutamine 625, and 688 to 691 (KGVG) contribute to the Mo-molybdopterin cytosine dinucleotide site. Glutamate 692 serves as the catalytic Proton acceptor.

It belongs to the xanthine dehydrogenase family. In terms of assembly, heterotrimer composed of PaoA, PaoB and PaoC. Mo-molybdopterin cytosine dinucleotide is required as a cofactor.

It localises to the periplasm. The enzyme catalyses an aldehyde + A + H2O = a carboxylate + AH2 + H(+). Functionally, oxidizes aldehydes to the corresponding carboxylic acids with a preference for aromatic aldehydes. It might play a role in the detoxification of aldehydes to avoid cell damage. The protein is Aldehyde oxidoreductase molybdenum-binding subunit PaoC of Escherichia coli O157:H7.